The sequence spans 263 residues: ATP synthase subunit a (263 aa).

A propeptide spans M1–N14 (removed in mature form). Helical transmembrane passes span F35–M57, V95–S117, V129–H151, F156–L178, L191–M213, and I228–I250.

The protein belongs to the ATPase A chain family. In terms of assembly, F-type ATPases have 2 components, CF(1) - the catalytic core - and CF(0) - the membrane proton channel. In yeast, the dimeric form of ATP synthase consists of 18 polypeptides: alpha, beta, gamma, delta, epsilon, 4 (B), 5 (OSCP), 6 (A), 8, 9 (C), d, E (Tim11), f, g, h, i, j and k.

The protein resides in the mitochondrion inner membrane. Functionally, mitochondrial membrane ATP synthase (F(1)F(0) ATP synthase or Complex V) produces ATP from ADP in the presence of a proton gradient across the membrane which is generated by electron transport complexes of the respiratory chain. F-type ATPases consist of two structural domains, F(1) - containing the extramembraneous catalytic core and F(0) - containing the membrane proton channel, linked together by a central stalk and a peripheral stalk. During catalysis, ATP synthesis in the catalytic domain of F(1) is coupled via a rotary mechanism of the central stalk subunits to proton translocation. Key component of the proton channel; it may play a direct role in the translocation of protons across the membrane. The polypeptide is ATP synthase subunit a (ATP6) (Eremothecium gossypii (strain ATCC 10895 / CBS 109.51 / FGSC 9923 / NRRL Y-1056) (Yeast)).